A 298-amino-acid chain; its full sequence is Keratin-associated protein 10-11 (298 aa).

25 consecutive repeat copies span residues 26–30, 36–40, 57–61, 79–83, 89–93, 99–103, 104–108, 109–113, 114–118, 119–123, 126–130, 136–140, 146–150, 151–155, 156–160, 168–172, 178–182, 188–192, 193–197, 203–207, 225–229, 230–234, 249–253, 256–260, and 267–271. The tract at residues 26-271 is 25 X 5 AA repeats of C-C-X(3); sequence CCEPPCSAPS…SCQSSCCRPA (246 aa).

It belongs to the KRTAP type 10 family. As to quaternary structure, interacts with hair keratins. Restricted to a narrow region of the hair fiber cuticle, lying approximately 20 cell layers above the apex of the dermal papilla of the hair root; not detected in any other tissues.

Its function is as follows. In the hair cortex, hair keratin intermediate filaments are embedded in an interfilamentous matrix, consisting of hair keratin-associated proteins (KRTAP), which are essential for the formation of a rigid and resistant hair shaft through their extensive disulfide bond cross-linking with abundant cysteine residues of hair keratins. The matrix proteins include the high-sulfur and high-glycine-tyrosine keratins. The chain is Keratin-associated protein 10-11 (KRTAP10-11) from Homo sapiens (Human).